The chain runs to 490 residues: Betaine aldehyde dehydrogenase (490 aa).

K(+) is bound by residues Thr-26, Ile-27, and Asp-93. 150–152 serves as a coordination point for NAD(+); it reads GAW. Lys-162 acts as the Charge relay system in catalysis. An NAD(+)-binding site is contributed by 176 to 179; it reads KPSE. Val-180 is a binding site for K(+). 230 to 233 contacts NAD(+); it reads GVAS. A K(+)-binding site is contributed by Leu-246. Glu-252 acts as the Proton acceptor in catalysis. Positions 254, 286, and 387 each coordinate NAD(+). Cys-286 (nucleophile) is an active-site residue. Cysteine sulfenic acid (-SOH) is present on Cys-286. Residues Lys-457 and Gly-460 each coordinate K(+). Glu-464 functions as the Charge relay system in the catalytic mechanism.

This sequence belongs to the aldehyde dehydrogenase family. As to quaternary structure, dimer of dimers. K(+) is required as a cofactor.

It catalyses the reaction betaine aldehyde + NAD(+) + H2O = glycine betaine + NADH + 2 H(+). The protein operates within amine and polyamine biosynthesis; betaine biosynthesis via choline pathway; betaine from betaine aldehyde: step 1/1. Its function is as follows. Involved in the biosynthesis of the osmoprotectant glycine betaine. Catalyzes the irreversible oxidation of betaine aldehyde to the corresponding acid. In Escherichia coli O45:K1 (strain S88 / ExPEC), this protein is Betaine aldehyde dehydrogenase.